A 144-amino-acid polypeptide reads, in one-letter code: Large ribosomal subunit protein uL15 (144 aa).

The span at 1-10 (MKLHELKPAE) shows a compositional bias: basic and acidic residues. Residues 1–52 (MKLHELKPAEGSRQVRNRVGRGTSSGNGKTAGRGQKGQKARGKVRLGFEGGQ) are disordered. Residues 23-35 (TSSGNGKTAGRGQ) show a composition bias toward gly residues.

The protein belongs to the universal ribosomal protein uL15 family. Part of the 50S ribosomal subunit.

Binds to the 23S rRNA. The chain is Large ribosomal subunit protein uL15 from Ligilactobacillus salivarius (strain UCC118) (Lactobacillus salivarius).